The following is a 714-amino-acid chain: Protein artemis (714 aa).

Disordered stretches follow at residues Glu-391–Ala-500, Glu-516–Ile-577, Ala-598–Leu-617, and Glu-638–Asp-683. The span at Asn-427–Thr-440 shows a compositional bias: polar residues. Positions Val-447 to Ser-468 are enriched in acidic residues. Composition is skewed to polar residues over residues Ser-484–Ala-500 and Gly-532–Val-543. The segment covering Ser-544–Ser-561 has biased composition (low complexity). The span at Glu-562–Ile-577 shows a compositional bias: polar residues. Composition is skewed to basic and acidic residues over residues Asp-603–Trp-615 and Arg-660–Ser-670. Ser-670 carries the phosphoserine; by ATM modification.

It belongs to the DNA repair metallo-beta-lactamase (DRMBL) family. Interacts with PRKDC. Phosphorylation on undefined residues by PRKDC may stimulate endonucleolytic activity on 5' and 3' hairpins and overhangs. PRKDC must remain present, even after phosphorylation, for efficient hairpin opening.

Its subcellular location is the nucleus. In terms of biological role, required for V(D)J recombination, the process by which exons encoding the antigen-binding domains of immunoglobulins and T-cell receptor proteins are assembled from individual V, (D), and J gene segments. V(D)J recombination is initiated by the lymphoid specific RAG endonuclease complex, which generates site specific DNA double strand breaks (DSBs). These DSBs present two types of DNA end structures: hairpin sealed coding ends and phosphorylated blunt signal ends. These ends are independently repaired by the non homologous end joining (NHEJ) pathway to form coding and signal joints respectively. This protein exhibits single-strand specific 5'-3' exonuclease activity in isolation, and acquires endonucleolytic activity on 5' and 3' hairpins and overhangs when in a complex with PRKDC. The latter activity is required specifically for the resolution of closed hairpins prior to the formation of the coding joint. May also be required for the repair of complex DSBs induced by ionizing radiation, which require substantial end-processing prior to religation by NHEJ. The protein is Protein artemis (DCLRE1C) of Gallus gallus (Chicken).